Consider the following 328-residue polypeptide: Tetraacyldisaccharide 4'-kinase (328 aa).

59–66 (TAGGNGKT) serves as a coordination point for ATP.

This sequence belongs to the LpxK family.

It carries out the reaction a lipid A disaccharide + ATP = a lipid IVA + ADP + H(+). The protein operates within glycolipid biosynthesis; lipid IV(A) biosynthesis; lipid IV(A) from (3R)-3-hydroxytetradecanoyl-[acyl-carrier-protein] and UDP-N-acetyl-alpha-D-glucosamine: step 6/6. In terms of biological role, transfers the gamma-phosphate of ATP to the 4'-position of a tetraacyldisaccharide 1-phosphate intermediate (termed DS-1-P) to form tetraacyldisaccharide 1,4'-bis-phosphate (lipid IVA). This is Tetraacyldisaccharide 4'-kinase from Aliivibrio fischeri (strain ATCC 700601 / ES114) (Vibrio fischeri).